A 294-amino-acid polypeptide reads, in one-letter code: sn-glycerol-3-phosphate transport system permease protein UgpA (294 aa).

Residues 1–11 (MSPSRPGFSCS) are Cytoplasmic-facing. A helical membrane pass occupies residues 12 to 32 (WLPYLLVLPQLAITAIFFLWP). Residues 33–80 (AGEALWYSVQTLDPFGLSSEFVGLSNFIQLFQDEYYLASFYTTLIFSA) are Periplasmic-facing. The 213-residue stretch at 72 to 284 (FYTTLIFSAL…LLVIGLTVIQ (213 aa)) folds into the ABC transmembrane type-1 domain. The helical transmembrane segment at 81–101 (LVAGIGLNVSLFLAAMVDYVL) threads the bilayer. At 102-109 (RGSRLYQT) the chain is on the cytoplasmic side. A helical transmembrane segment spans residues 110-130 (LLILPYAVAPAVAAVLWIFLF). Residues 131–157 (DPGLGLITHALAKLGYSWNHAQNSGQA) lie on the Periplasmic side of the membrane. The helical transmembrane segment at 158–178 (MFLVVLASVWKQISYNFLFFL) threads the bilayer. Over 179 to 207 (AALQSIPKSLVEAAAIDGAGPVRRFFNLV) the chain is Cytoplasmic. Residues 208–228 (LPLISPVSFFLLVVNLVYAFF) form a helical membrane-spanning segment. The Periplasmic portion of the chain corresponds to 229–262 (DTFPVIDAATGGGPVQATTTLIYKIYREGFAGLD). Residues 263-283 (LSSSAAQSVILMLLVIGLTVI) form a helical membrane-spanning segment. Over 284 to 294 (QFRFVERKVRY) the chain is Cytoplasmic.

The protein belongs to the binding-protein-dependent transport system permease family. UgpAE subfamily. The complex is composed of two ATP-binding proteins (UgpC), two transmembrane proteins (UgpA and UgpE) and a solute-binding protein (UgpB).

Its subcellular location is the cell inner membrane. Part of the ABC transporter complex UgpBAEC involved in sn-glycerol-3-phosphate (G3P) import. Probably responsible for the translocation of the substrate across the membrane. This chain is sn-glycerol-3-phosphate transport system permease protein UgpA (ugpA), found in Yersinia pseudotuberculosis serotype I (strain IP32953).